A 1496-amino-acid polypeptide reads, in one-letter code: Carbamoyl-phosphate synthase [ammonia], mitochondrial (1496 aa).

A mitochondrion-targeting transit peptide spans 1 to 33 (MTRILSVFKTAKTGVLNAAAHRYRGFSKAGVRL). Positions 34 to 214 (MSVKAQTANL…TKVFGKGNPV (181 aa)) are anthranilate phosphoribosyltransferase homolog. The 187-residue stretch at 215 to 401 (RIVAVDCGVK…MSLIKKGKGT (187 aa)) folds into the Glutamine amidotransferase type-1 domain. C290 functions as the For GATase activity in the catalytic mechanism. 2 ATP-grasp domains span residues 548–740 (SDKL…KIAL) and 1090–1281 (SAVL…KVMI). Residues 1352–1496 (FKLPQKGILI…YRQFGGAKPS (145 aa)) enclose the MGS-like domain. 6 residues coordinate N-acetyl-L-glutamate: T1388, T1391, W1407, N1433, N1436, and N1445.

It localises to the mitochondrion. It catalyses the reaction hydrogencarbonate + NH4(+) + 2 ATP = carbamoyl phosphate + 2 ADP + phosphate + 2 H(+). Requires N-acetyl-L-glutamate (NAG) as an allosteric activator. Involved in the urea cycle of ureotelic animals where the enzyme plays an important role in removing excess ammonia from the cell. This is Carbamoyl-phosphate synthase [ammonia], mitochondrial from Aquarana catesbeiana (American bullfrog).